The primary structure comprises 257 residues: NH(3)-dependent NAD(+) synthetase (257 aa).

Residue G32 to S39 participates in ATP binding. D38 provides a ligand contact to Mg(2+). R113 lines the deamido-NAD(+) pocket. T133 contributes to the ATP binding site. Residue E138 coordinates Mg(2+). ATP is bound by residues K162 and S184.

It belongs to the NAD synthetase family. In terms of assembly, homodimer.

The catalysed reaction is deamido-NAD(+) + NH4(+) + ATP = AMP + diphosphate + NAD(+) + H(+). Its pathway is cofactor biosynthesis; NAD(+) biosynthesis; NAD(+) from deamido-NAD(+) (ammonia route): step 1/1. Functionally, catalyzes the ATP-dependent amidation of deamido-NAD to form NAD. Uses ammonia as a nitrogen source. This is NH(3)-dependent NAD(+) synthetase from Wolinella succinogenes (strain ATCC 29543 / DSM 1740 / CCUG 13145 / JCM 31913 / LMG 7466 / NCTC 11488 / FDC 602W) (Vibrio succinogenes).